A 122-amino-acid polypeptide reads, in one-letter code: Small ribosomal subunit protein uS13 (122 aa).

Residues 99-122 (RGQRTHTNARTRKGPAKAIAGKKK) form a disordered region.

It belongs to the universal ribosomal protein uS13 family. In terms of assembly, part of the 30S ribosomal subunit. Forms a loose heterodimer with protein S19. Forms two bridges to the 50S subunit in the 70S ribosome.

In terms of biological role, located at the top of the head of the 30S subunit, it contacts several helices of the 16S rRNA. In the 70S ribosome it contacts the 23S rRNA (bridge B1a) and protein L5 of the 50S subunit (bridge B1b), connecting the 2 subunits; these bridges are implicated in subunit movement. Contacts the tRNAs in the A and P-sites. This is Small ribosomal subunit protein uS13 from Agrobacterium fabrum (strain C58 / ATCC 33970) (Agrobacterium tumefaciens (strain C58)).